We begin with the raw amino-acid sequence, 206 residues long: Ribosomal RNA small subunit methyltransferase G (206 aa).

S-adenosyl-L-methionine contacts are provided by residues Gly71, Phe76, 125–126, and Arg139; that span reads IE.

Belongs to the methyltransferase superfamily. RNA methyltransferase RsmG family.

It localises to the cytoplasm. The catalysed reaction is guanosine(527) in 16S rRNA + S-adenosyl-L-methionine = N(7)-methylguanosine(527) in 16S rRNA + S-adenosyl-L-homocysteine. In terms of biological role, specifically methylates the N7 position of guanine in position 527 of 16S rRNA. This is Ribosomal RNA small subunit methyltransferase G from Cereibacter sphaeroides (strain ATCC 17023 / DSM 158 / JCM 6121 / CCUG 31486 / LMG 2827 / NBRC 12203 / NCIMB 8253 / ATH 2.4.1.) (Rhodobacter sphaeroides).